The primary structure comprises 618 residues: Leucine aminopeptidase 2 (618 aa).

A peptide-binding positions include 139–141 (QCQ) and 271–276 (PYGGME). H300 contributes to the Zn(2+) binding site. The active-site Proton acceptor is E301. Residues H304 and E323 each coordinate Zn(2+). Residue Y388 is the Proton donor of the active site.

It belongs to the peptidase M1 family. The cofactor is Zn(2+).

It is found in the cytoplasm. The protein localises to the nucleus. The enzyme catalyses an epoxide + H2O = an ethanediol. Functionally, aminopeptidase that preferentially cleaves di- and tripeptides. Also has low epoxide hydrolase activity (in vitro). Can hydrolyze the epoxide leukotriene LTA(4) but it forms preferentially 5,6-dihydroxy-7,9,11,14-eicosatetraenoic acid rather than the cytokine leukotriene B(4) as the product compared to the homologous mammalian enzyme (in vitro). In Aspergillus niger (strain ATCC MYA-4892 / CBS 513.88 / FGSC A1513), this protein is Leucine aminopeptidase 2.